The following is a 79-amino-acid chain: Sulfur carrier protein TusA (79 aa).

The Cysteine persulfide intermediate role is filled by cysteine 17.

This sequence belongs to the sulfur carrier protein TusA family.

It localises to the cytoplasm. Its function is as follows. Sulfur carrier protein which probably makes part of a sulfur-relay system. This is Sulfur carrier protein TusA from Actinobacillus succinogenes (strain ATCC 55618 / DSM 22257 / CCUG 43843 / 130Z).